A 387-amino-acid chain; its full sequence is Exodeoxyribonuclease 7 large subunit (387 aa).

The protein belongs to the XseA family. In terms of assembly, heterooligomer composed of large and small subunits.

It localises to the cytoplasm. It catalyses the reaction Exonucleolytic cleavage in either 5'- to 3'- or 3'- to 5'-direction to yield nucleoside 5'-phosphates.. Bidirectionally degrades single-stranded DNA into large acid-insoluble oligonucleotides, which are then degraded further into small acid-soluble oligonucleotides. The protein is Exodeoxyribonuclease 7 large subunit of Campylobacter jejuni (strain RM1221).